We begin with the raw amino-acid sequence, 224 residues long: MTQDQLKQAVAQAAVDFILPKLDDKSIVGVGTGSTANCFIDALAQHKGAFDGAVASSEATAARLKGHGIPVYELNTVSNLEFYVDGADESDEHLNLIKGGGAALTREKIVAAVAQTFICIADASKLVPVLGAFPLPVEVIPMARSHVARQLVKLGGDPVYREGVLTDNGNIILDVHNLQITNPVELEAQINAIVGVVTNGLFAARPADLLLLGTSEGVKTLKAE.

Substrate-binding positions include 32 to 35 (TGST), 85 to 88 (DGAD), and 98 to 101 (KGGG). The active-site Proton acceptor is the glutamate 107. Lysine 125 lines the substrate pocket.

Belongs to the ribose 5-phosphate isomerase family. As to quaternary structure, homodimer.

The enzyme catalyses aldehydo-D-ribose 5-phosphate = D-ribulose 5-phosphate. The protein operates within carbohydrate degradation; pentose phosphate pathway; D-ribose 5-phosphate from D-ribulose 5-phosphate (non-oxidative stage): step 1/1. In terms of biological role, catalyzes the reversible conversion of ribose-5-phosphate to ribulose 5-phosphate. This is Ribose-5-phosphate isomerase A from Pseudomonas fluorescens (strain Pf0-1).